A 100-amino-acid chain; its full sequence is Urease subunit gamma (100 aa).

This sequence belongs to the urease gamma subunit family. Heterotrimer of UreA (gamma), UreB (beta) and UreC (alpha) subunits. Three heterotrimers associate to form the active enzyme.

Its subcellular location is the cytoplasm. The catalysed reaction is urea + 2 H2O + H(+) = hydrogencarbonate + 2 NH4(+). It participates in nitrogen metabolism; urea degradation; CO(2) and NH(3) from urea (urease route): step 1/1. In Staphylococcus aureus (strain N315), this protein is Urease subunit gamma.